A 143-amino-acid polypeptide reads, in one-letter code: MSPEQWGIYGWTFSHAVALGYPINPTEEDKLRYYTFFNSYRYVLPCGKCRINYADHLNKYPLTDEVLSSRENLVKWTIDIHNVVNYYTGKKMLTYPEAIEAIEKTLTPKKKSSYNWFFIILIIIGIIVIIYLMYIVFKKKLNK.

Positions 10–104 (GWTFSHAVAL…YPEAIEAIEK (95 aa)) constitute an ERV/ALR sulfhydryl oxidase domain. Cys-46 and Cys-49 form a disulfide bridge. The helical transmembrane segment at 117–137 (FFIILIIIGIIVIIYLMYIVF) threads the bilayer.

FAD is required as a cofactor.

The protein resides in the membrane. The enzyme catalyses 2 R'C(R)SH + O2 = R'C(R)S-S(R)CR' + H2O2. Its function is as follows. FAD-dependent sulfhydryl oxidase that catalyzes disulfide bond formation. This is Probable FAD-linked sulfhydryl oxidase R368 from Acanthamoeba polyphaga mimivirus (APMV).